We begin with the raw amino-acid sequence, 326 residues long: Eukaryotic translation initiation factor 3 subunit I (326 aa).

5 WD repeats span residues 8 to 47 (GHER…RLGT), 50 to 89 (GHQG…IIAS), 145 to 184 (MTES…KVVD), 188 to 227 (DHAA…CLKT), and 285 to 326 (GHFG…NIFE).

It belongs to the eIF-3 subunit I family. In terms of assembly, component of the eukaryotic translation initiation factor 3 (eIF-3) complex. The eIF-3 complex interacts with pix.

It is found in the cytoplasm. In terms of biological role, component of the eukaryotic translation initiation factor 3 (eIF-3) complex, which is involved in protein synthesis of a specialized repertoire of mRNAs and, together with other initiation factors, stimulates binding of mRNA and methionyl-tRNAi to the 40S ribosome. The eIF-3 complex specifically targets and initiates translation of a subset of mRNAs involved in cell proliferation. This is Eukaryotic translation initiation factor 3 subunit I from Drosophila pseudoobscura pseudoobscura (Fruit fly).